The chain runs to 651 residues: Acetyl-coenzyme A synthetase (651 aa).

Residues 190 to 193 and threonine 311 contribute to the CoA site; that span reads RRGK. ATP contacts are provided by residues 387 to 389, 411 to 416, aspartate 508, and arginine 523; these read GEP and DTWWQT. Serine 531 contacts CoA. An ATP-binding site is contributed by arginine 534. Mg(2+) contacts are provided by valine 545, histidine 547, and valine 550. Position 617 is an N6-acetyllysine (lysine 617).

Belongs to the ATP-dependent AMP-binding enzyme family. The cofactor is Mg(2+). In terms of processing, acetylated. Deacetylation by the SIR2-homolog deacetylase activates the enzyme.

The enzyme catalyses acetate + ATP + CoA = acetyl-CoA + AMP + diphosphate. Its function is as follows. Catalyzes the conversion of acetate into acetyl-CoA (AcCoA), an essential intermediate at the junction of anabolic and catabolic pathways. AcsA undergoes a two-step reaction. In the first half reaction, AcsA combines acetate with ATP to form acetyl-adenylate (AcAMP) intermediate. In the second half reaction, it can then transfer the acetyl group from AcAMP to the sulfhydryl group of CoA, forming the product AcCoA. M.tuberculosis may use AcsA for both acetate and propionate assimilation. The polypeptide is Acetyl-coenzyme A synthetase (Mycobacterium tuberculosis (strain CDC 1551 / Oshkosh)).